Here is a 181-residue protein sequence, read N- to C-terminus: Inner membrane-spanning protein YciB (181 aa).

5 helical membrane passes run 22–42 (IYTA…LTYV), 50–70 (MQLI…FLHD), 80–100 (IVYA…RPII), 118–138 (INYA…YVAF), and 148–168 (FKVF…GMYV).

This sequence belongs to the YciB family.

The protein resides in the cell inner membrane. Plays a role in cell envelope biogenesis, maintenance of cell envelope integrity and membrane homeostasis. The polypeptide is Inner membrane-spanning protein YciB (Aliivibrio salmonicida (strain LFI1238) (Vibrio salmonicida (strain LFI1238))).